The primary structure comprises 167 residues: RNA pyrophosphohydrolase (167 aa).

The Nudix hydrolase domain maps to 8 to 159; sequence PYRTCVGVML…KRPVYERVVK (152 aa). Positions 47 to 68 match the Nudix box motif; the sequence is GGVDPGEDTWAAAKRELYEETS.

This sequence belongs to the Nudix hydrolase family. RppH subfamily. Requires a divalent metal cation as cofactor.

In terms of biological role, accelerates the degradation of transcripts by removing pyrophosphate from the 5'-end of triphosphorylated RNA, leading to a more labile monophosphorylated state that can stimulate subsequent ribonuclease cleavage. This Bradyrhizobium diazoefficiens (strain JCM 10833 / BCRC 13528 / IAM 13628 / NBRC 14792 / USDA 110) protein is RNA pyrophosphohydrolase.